The sequence spans 95 residues: Complement inhibitor RaCI5 (95 aa).

The N-terminal stretch at 1–21 (MNAVIVLCVTISAVLIHQCYS) is a signal peptide. Cystine bridges form between C35–C59, C40–C61, and C55–C76.

This sequence belongs to the RaCI family. As to expression, expressed in salivary glands.

The protein resides in the secreted. In terms of biological role, complement inhibitor. Prevents complement-mediated C5 activation by binding to C5. Binds C5 at a different binding site than the other tick complement inhibitors OmCI and CirpT1, and the drug eculizumab. The protein is Complement inhibitor RaCI5 of Rhipicephalus appendiculatus (Brown ear tick).